We begin with the raw amino-acid sequence, 150 residues long: uncharacterized protein (150 aa).

Residues 1–133 form the HTH marR-type domain; the sequence is MNDILREIGM…ISALLHRVRK (133 aa). A DNA-binding region (H-T-H motif) is located at residues 47–70; that stretch reads QEKLAEMIKVDRTTAARAIKKLEM.

This is an uncharacterized protein from Bacillus subtilis (strain 168).